Consider the following 405-residue polypeptide: Growth/differentiation factor 11 (405 aa).

The signal sequence occupies residues 1–24; it reads MVLAAPLLLGFLLLALELRPRGEA. Positions 25 to 296 are excised as a propeptide; that stretch reads AEGPAAAAAA…VLENTKRSRR (272 aa). Residue asparagine 92 is glycosylated (N-linked (GlcNAc...) asparagine). 4 disulfides stabilise this stretch: cysteine 302–cysteine 312, cysteine 311–cysteine 370, cysteine 339–cysteine 402, and cysteine 343–cysteine 404.

The protein belongs to the TGF-beta family. Homodimer; disulfide-linked. Interacts directly with ACVR2B. Interacts directly with ACVR2A. Interacts with ACVR1B, TGFBR1 and ACVR1C in an ACVR2B-dependent manner. Interacts with FST isoform 2/FS288. Synthesized as large precursor molecule that undergoes proteolytic cleavage by furin-like proteases. This produces an inactive form consisting of the mature C-terminal portion non-covalently bound to its cleaved N-terminal propeptide. Activation of the mature form requires additional cleavage of the propeptide by a tolloid-like metalloproteinase.

Its subcellular location is the secreted. Secreted signal that acts globally to regulate anterior/posterior axial patterning during development. May play critical roles in patterning both mesodermal and neural tissues. It is required for proper vertebral patterning and orofacial development. Signals through activin receptors type-2, ACVR2A and ACVR2B, and activin receptors type-1, ACVR1B, ACVR1C and TGFBR1 leading to the phosphorylation of SMAD2 and SMAD3. In Rattus norvegicus (Rat), this protein is Growth/differentiation factor 11 (Gdf11).